A 647-amino-acid chain; its full sequence is MPSKSACLRHTEAPGQLEGRMLQGQPPNTEKKLIPTPGFLPASDSQGSETNPMPPFSIPAKTSNQNPQTKANLITPQPPIRPKLERTLSLDDKGWRRRRFRGSQEDLTVQNGASPCRGSLQDSVAQSPAYSRPLPCLSTSLQEIPKSRRATGSEGGSPSLWSDCLSGMISTSLDLLHRDAASGGPPSRLASLHASHTPPAMDLSIASSSLRTANKVDPEHTDYKLRMQTRLVRAHSNLGPSRPRSPLAGDDHSIHSARSFSLLAPIRTKDIRSRSYLEGSLLASGALLGAEELARYFPDRNMALFVATWNMQGQKELPASLDEFLLPTEADYTQDLYVIGIQEGCSDRREWETRLQETLGPQYVLLSSAAHGVLYMSLFIRRDLIWFCSEVEYSTVTTRIVSQIKTKGALGVSFTFFGTSFLFITSHFTSGDGKVAERLLDYSRTIQALALPRNVPDTNPYRSSAGDVTTRFDEVFWFGDFNFRLSGGRVAVEAFLKQKPEVDVLALLQHDQLTREMKKGSIFRGFEEAEIHFLPSYKFDIGKDTYDSTSKQRTPSYTDRVLYKSRHKGDICPMKYSSCPGIKTSDHRPVYGLFQVKVRPGRDNIPLAAGKFDRELYLIGIKRRISKEIQRQEALKSQSSSAVCTVS.

3 disordered regions span residues 1–80, 101–131, and 177–196; these read MPSK…QPPI, RGSQ…PAYS, and HRDA…HASH. Residues 52–55 form repeat 1; the sequence is PMPP. A 3 X 4 AA repeats of P-X-X-P region spans residues 52-243; it reads PMPPFSIPAK…AHSNLGPSRP (192 aa). Polar residues predominate over residues 60–75; it reads AKTSNQNPQTKANLIT. Repeat 2 spans residues 76–79; that stretch reads PQPP. Position 103 is a phosphoserine (Ser103). Over residues 120–129 the composition is skewed to polar residues; that stretch reads LQDSVAQSPA. Thr197 carries the post-translational modification Phosphothreonine. Copy 3 of the repeat occupies 240-243; the sequence is PSRP. A phosphoserine mark is found at Ser245 and Ser259. Cys644 carries the cysteine methyl ester modification. Cys644 carries S-farnesyl cysteine lipidation. A propeptide spans 645 to 647 (removed in mature form); that stretch reads TVS.

The protein belongs to the inositol polyphosphate 5-phosphatase family. In terms of assembly, interacts (when prenylated) with PDE6D; this is important for normal location in cilia. Highly expressed in testis, in pachytene and diplotene spermatocytes, but not in more mature elongating spermatids. Detected in neurons throughout the brain.

The protein localises to the cytoplasm. It localises to the cytoskeleton. It is found in the cilium axoneme. Its subcellular location is the golgi apparatus. The protein resides in the golgi stack membrane. The protein localises to the cell projection. It localises to the ruffle. It is found in the cell membrane. Its subcellular location is the nucleus. It carries out the reaction a 1,2-diacyl-sn-glycero-3-phospho-(1D-myo-inositol-4,5-bisphosphate) + H2O = a 1,2-diacyl-sn-glycero-3-phospho-(1D-myo-inositol 4-phosphate) + phosphate. The enzyme catalyses a 1,2-diacyl-sn-glycero-3-phospho-(1D-myo-inositol-3,4,5-trisphosphate) + H2O = a 1,2-diacyl-sn-glycero-3-phospho-(1D-myo-inositol-3,4-bisphosphate) + phosphate. The catalysed reaction is a 1,2-diacyl-sn-glycero-3-phospho-(1D-myo-inositol-3,5-bisphosphate) + H2O = a 1,2-diacyl-sn-glycero-3-phospho-(1D-myo-inositol-3-phosphate) + phosphate. Its function is as follows. Phosphatidylinositol (PtdIns) phosphatase that specifically hydrolyzes the 5-phosphate of phosphatidylinositol-3,4,5-trisphosphate (PtdIns(3,4,5)P3), phosphatidylinositol 4,5-bisphosphate (PtdIns(4,5)P2) and phosphatidylinositol 3,5-bisphosphate (PtdIns(3,5)P2). Specific for lipid substrates, inactive towards water soluble inositol phosphates. Specific for lipid substrates, inactive towards water soluble inositol phosphates. Plays an essential role in the primary cilium by controlling ciliary growth and phosphoinositide 3-kinase (PI3K) signaling and stability. This Mus musculus (Mouse) protein is Phosphatidylinositol polyphosphate 5-phosphatase type IV (Inpp5e).